The following is a 943-amino-acid chain: Isoleucine--tRNA ligase (943 aa).

The short motif at 58 to 68 is the 'HIGH' region element; the sequence is PYANGSIHIGH. Position 567 (glutamate 567) interacts with L-isoleucyl-5'-AMP. Residues 608–612 carry the 'KMSKS' region motif; sequence KMSKS. Lysine 611 provides a ligand contact to ATP. Residues cysteine 906, cysteine 909, cysteine 926, and cysteine 929 each coordinate Zn(2+).

This sequence belongs to the class-I aminoacyl-tRNA synthetase family. IleS type 1 subfamily. Monomer. Zn(2+) is required as a cofactor.

It localises to the cytoplasm. It catalyses the reaction tRNA(Ile) + L-isoleucine + ATP = L-isoleucyl-tRNA(Ile) + AMP + diphosphate. Catalyzes the attachment of isoleucine to tRNA(Ile). As IleRS can inadvertently accommodate and process structurally similar amino acids such as valine, to avoid such errors it has two additional distinct tRNA(Ile)-dependent editing activities. One activity is designated as 'pretransfer' editing and involves the hydrolysis of activated Val-AMP. The other activity is designated 'posttransfer' editing and involves deacylation of mischarged Val-tRNA(Ile). This Pseudomonas paraeruginosa (strain DSM 24068 / PA7) (Pseudomonas aeruginosa (strain PA7)) protein is Isoleucine--tRNA ligase.